A 520-amino-acid chain; its full sequence is MERFPRSAADAQQLLQLAELFKQSAEIIAEEWNKEDFSRIKAETNSIKSNLGSLDTARILPSPRLHEATRTVLAITGAATELVAEPYSRIQEVACQYFESRALFVAAERRIPDLLAGAGEYGLSVGEIAEATGIEERKLSRILRCLCSIHIFRQIGTDRFANNRISAALKNNEPLRAYVQLFNLDIYTASDQLPKYLLSSQGASYKVHETAWQKAVGTTKARWDWLAERVSLDEVRPKEAPYPGLPDVRHLQPGPDGKYARPELDNFGLAMVGGGKVSGAAHAYDFPWASLGDALVVDVGGGVGGFVLQLLPAYPQLRYIVQDRAEVLQQAQEEIWPVEAPEAVADGRVQFMEHNFFQPNPVKGADVYWLRGIFYCVQILSALRTSMAPTSRILVCDQVMNTTAGCDEIPPAPSPLPANYGYYMRYPHHRDLAMMSIINGIERTPAQFTELVKQAGLKVNKIWNCRSMVGIVEIGLKNEKDRHHRRLSYMGFGNYTQLGIGFFSSAKGPVRDELQADEQA.

S-adenosyl-L-methionine-binding positions include 300–301 (GG), D323, 355–356 (NF), and R371.

This sequence belongs to the class I-like SAM-binding methyltransferase superfamily. Cation-independent O-methyltransferase family.

It participates in phytotoxin biosynthesis. Functionally, O-methyltransferase; part of the gene cluster that mediates the biosynthesis of cichorine, a phytotoxin active against knapweed, corn, and soybeans. The first step in the pathway is performed by the non-reducing polyketide synthase pkbA that condenses one acetyl-CoA starter unit with 3 malonyl-CoA units. PkbA also catalyzes one methylation step to produce 3-methylorsellinate. The nonribosomal peptide synthase-like protein cicB, the cytochrome P450 monooxygenase cicH and the O-methyltransferase cicE are involved in the conversion of 3-methylorsellinate into nidulol. CicB converts 3-methylorsellinate to a yet unidentified intermediate, cicH may play a ring-closing role for cichorine and cicE is plausibly responsible for the methylation of one of the phenol groups. The oxidoreductase cicC acts downstream with still unidentified enzymes to further convert nidulol into cichorine. The protein is O-methyltransferase cicE of Emericella nidulans (strain FGSC A4 / ATCC 38163 / CBS 112.46 / NRRL 194 / M139) (Aspergillus nidulans).